A 353-amino-acid chain; its full sequence is MSTTPTSAPETTQTDVLIVGAGPVGLFAAFQAGVLGLKCEIVDVLDRAGGQCTELYPEKPIYDIPAVPGCLAQDLVDRLLEQCAPFAFPMHFSQRAESVSDTTCTNGHPRLLVTTDAGKRFDVAAVLICAGAGAFAPQRVSLPEAAALEDRHLHYAVRDLSRFAGKRVIVAGGGDSALDWAMALRKTAARVTLLHRREGFRAADHTVKAMRDAVAAGEMDFVVGMLGGLQTNGDGALTGAVVKSRDGEQTIPADDLVALYGLVSEPGPIAQWDMDMRAGRIAVDTTTYESSRRGIFAAGDIAFYPNKQKLILSGFHEAALALRKAYHYAFPEKSLVHVHTSNNAALKERLTHG.

7 residues coordinate FAD: Asp43, Gln51, Tyr56, Ala96, Phe135, Asp300, and Ser341.

It belongs to the ferredoxin--NADP reductase type 2 family. Homodimer. It depends on FAD as a cofactor.

It carries out the reaction 2 reduced [2Fe-2S]-[ferredoxin] + NADP(+) + H(+) = 2 oxidized [2Fe-2S]-[ferredoxin] + NADPH. The sequence is that of Ferredoxin--NADP reductase 1 from Cupriavidus metallidurans (strain ATCC 43123 / DSM 2839 / NBRC 102507 / CH34) (Ralstonia metallidurans).